The primary structure comprises 229 residues: Triosephosphate isomerase (229 aa).

16 to 18 (NFK) is a binding site for substrate. Histidine 100 (electrophile) is an active-site residue. Glutamate 148 serves as the catalytic Proton acceptor. Residues isoleucine 153, glycine 188, and 209 to 210 (AS) each bind substrate.

Belongs to the triosephosphate isomerase family. In terms of assembly, homotetramer; dimer of dimers.

The protein resides in the cytoplasm. It carries out the reaction D-glyceraldehyde 3-phosphate = dihydroxyacetone phosphate. It functions in the pathway carbohydrate biosynthesis; gluconeogenesis. The protein operates within carbohydrate degradation; glycolysis; D-glyceraldehyde 3-phosphate from glycerone phosphate: step 1/1. In terms of biological role, involved in the gluconeogenesis. Catalyzes stereospecifically the conversion of dihydroxyacetone phosphate (DHAP) to D-glyceraldehyde-3-phosphate (G3P). The polypeptide is Triosephosphate isomerase (Methanothermobacter thermautotrophicus (strain ATCC 29096 / DSM 1053 / JCM 10044 / NBRC 100330 / Delta H) (Methanobacterium thermoautotrophicum)).